Here is a 380-residue protein sequence, read N- to C-terminus: Growth-regulating factor 4 (380 aa).

The tract at residues 1–21 is disordered; that stretch reads MDLQLKQWRSQQQNESEEQGS. Residues 82–117 form the QLQ domain; it reads FFSWAQWQELELQALIYRYMLAGASVPQELLLPIKK. The 45-residue stretch at 151–195 folds into the WRC domain; sequence DPEPGRCKRTDGKKWRCSRDVVAGHKYCDRHIHRGRNRSRKPVET. Short sequence motifs (bipartite nuclear localization signal) lie at residues 156 to 166 and 184 to 191; these read RCKRTDGKKWR and RGRNRSRK. Disordered stretches follow at residues 222-270 and 284-330; these read NNNH…GRSD and RSSD…NMRN. Composition is skewed to low complexity over residues 228–245 and 285–296; these read SSGS…SCSS and SSDSTSSPMSSS. The segment covering 297–320 has biased composition (polar residues); it reads TCHLSISMPGNNTSSDVSLKLSTG.

It belongs to the GRF family. As to expression, strongly expressed in actively growing and developing tissues, such as roots, upper stems, and shoot tips containing the shoot apical meristem (SAM) and flower buds. Also expressed in mature flowers, but weakly expressed in mature stems and leaves.

It localises to the nucleus. Functionally, transcription activator that plays a role in the regulation of cell expansion in leaf and cotyledons tissues. Component of a network formed by miR396, the GRFs and their interacting factors (GIFs) acting in the regulation of meristem function, at least partially through the control of cell proliferation. In Arabidopsis thaliana (Mouse-ear cress), this protein is Growth-regulating factor 4 (GRF4).